A 341-amino-acid polypeptide reads, in one-letter code: Ribosomal RNA small subunit methyltransferase C (341 aa).

Belongs to the methyltransferase superfamily. RsmC family. As to quaternary structure, monomer.

It is found in the cytoplasm. The catalysed reaction is guanosine(1207) in 16S rRNA + S-adenosyl-L-methionine = N(2)-methylguanosine(1207) in 16S rRNA + S-adenosyl-L-homocysteine + H(+). Functionally, specifically methylates the guanine in position 1207 of 16S rRNA in the 30S particle. The polypeptide is Ribosomal RNA small subunit methyltransferase C (Pseudoalteromonas translucida (strain TAC 125)).